The following is a 411-amino-acid chain: 3-phosphoshikimate 1-carboxyvinyltransferase (411 aa).

3-phosphoshikimate is bound by residues lysine 20, serine 21, and arginine 25. Lysine 20 is a phosphoenolpyruvate binding site. Phosphoenolpyruvate is bound by residues glycine 86 and arginine 114. Residues serine 156, serine 157, glutamine 158, serine 181, aspartate 295, and lysine 322 each coordinate 3-phosphoshikimate. Glutamine 158 contacts phosphoenolpyruvate. Aspartate 295 acts as the Proton acceptor in catalysis. Phosphoenolpyruvate-binding residues include arginine 326, arginine 367, and lysine 393.

The protein belongs to the EPSP synthase family. In terms of assembly, monomer.

The protein resides in the cytoplasm. It catalyses the reaction 3-phosphoshikimate + phosphoenolpyruvate = 5-O-(1-carboxyvinyl)-3-phosphoshikimate + phosphate. The protein operates within metabolic intermediate biosynthesis; chorismate biosynthesis. In terms of biological role, catalyzes the transfer of the enolpyruvyl moiety of phosphoenolpyruvate (PEP) to the 5-hydroxyl of shikimate-3-phosphate (S3P) to produce enolpyruvyl shikimate-3-phosphate and inorganic phosphate. This Picrophilus torridus (strain ATCC 700027 / DSM 9790 / JCM 10055 / NBRC 100828 / KAW 2/3) protein is 3-phosphoshikimate 1-carboxyvinyltransferase.